The following is a 469-amino-acid chain: NADH-quinone oxidoreductase subunit 13 (469 aa).

14 helical membrane passes run 1–21 (MVVL…LGLP), 23–43 (ALGV…FLTH), 47–67 (VAHA…AFGL), 69–89 (GLSA…ALVA), 91–111 (VEGR…GLFA), 115–135 (LLVF…MLYL), 144–164 (ALYT…AAVL), 190–210 (AFWV…LFPL), 258–278 (GLLL…AFAA), 284–304 (LLAY…FSGT), 308–328 (AMGG…LFLL), 354–374 (LAAL…LSGF), 390–410 (WLAA…LTAF), and 430–450 (WGFA…PGYF).

It belongs to the complex I subunit 4 family. NDH-1 is composed of 15 different subunits, Nqo1 to Nqo15. The complex has a L-shaped structure, with the hydrophobic arm (subunits Nqo7, Nqo8 and Nqo10 to Nqo14) embedded in the membrane and the hydrophilic peripheral arm (subunits Nqo1 to Nqo6, Nqo9 and Nqo15) protruding into the bacterial cytoplasm. The hydrophilic domain contains all the redox centers.

It is found in the cell inner membrane. The catalysed reaction is a quinone + NADH + 5 H(+)(in) = a quinol + NAD(+) + 4 H(+)(out). Functionally, NDH-1 shuttles electrons from NADH, via FMN and iron-sulfur (Fe-S) centers, to quinones in the respiratory chain. The immediate electron acceptor for the enzyme in this species is menaquinone. Couples the redox reaction to proton translocation (for every two electrons transferred, four hydrogen ions are translocated across the cytoplasmic membrane), and thus conserves the redox energy in a proton gradient required for the synthesis of ATP. The polypeptide is NADH-quinone oxidoreductase subunit 13 (nqo13) (Thermus thermophilus (strain ATCC 27634 / DSM 579 / HB8)).